The chain runs to 685 residues: T-box transcription factor TBX2 (685 aa).

The segment at residues 104 to 277 is a DNA-binding region (T-box); sequence LWDQFHKLGT…NNPFAKGFRD (174 aa). 2 disordered regions span residues 270–433 and 606–660; these read PFAK…CGSL and NLLT…SINE. Composition is skewed to basic and acidic residues over residues 296-308, 340-361, 378-403, and 410-428; these read MYEE…RDGA, SNRE…EVRT, RLED…KDGG, and SLEK…KSDP. The span at 606 to 617 shows a compositional bias: polar residues; it reads NLLTTGLSASLN. Residues 618-633 show a composition bias toward low complexity; that stretch reads PGSESSKPGSSRESSP. The stretch at 652 to 676 forms a coiled coil; the sequence is ASMKDSINELQNIQRLVSGLESQRE.

In terms of assembly, binds DNA as a monomer.

The protein localises to the nucleus. Transcription factor which acts as a transcriptional repressor. May also function as a transcriptional activator. Binds to the palindromic T site 5'-TTCACACCTAGGTGTGAA-3' DNA sequence, or a half-site, which are present in the regulatory region of several genes. The sequence is that of T-box transcription factor TBX2 (tbx2) from Xenopus tropicalis (Western clawed frog).